The sequence spans 70 residues: Putative membrane protein insertion efficiency factor (70 aa).

It belongs to the UPF0161 family.

The protein localises to the cell inner membrane. Its function is as follows. Could be involved in insertion of integral membrane proteins into the membrane. This chain is Putative membrane protein insertion efficiency factor, found in Francisella tularensis subsp. tularensis (strain SCHU S4 / Schu 4).